The following is an 83-amino-acid chain: Mu-theraphotoxin-Hhn2f (83 aa).

A signal peptide spans 1–21 (MKASMFLALAGLVLLFVVGYA). Positions 22-48 (SESEEKEFPIELLSKIFAVDVFKGEER) are excised as a propeptide. Intrachain disulfides connect Cys-50-Cys-65, Cys-57-Cys-70, and Cys-64-Cys-77. Residue Leu-81 is modified to Leucine amide.

The protein belongs to the neurotoxin 10 (Hwtx-1) family. 15 (Hntx-3) subfamily. Monomer. As to expression, expressed by the venom gland.

It is found in the secreted. Its function is as follows. Lethal neurotoxin. Selectively blocks tetrodotoxin-sensitive voltage-gated sodium channels (Nav). Does not affect tetrodotoxin-resistant voltage-gated sodium channels or calcium channels. The protein is Mu-theraphotoxin-Hhn2f of Cyriopagopus hainanus (Chinese bird spider).